Here is a 507-residue protein sequence, read N- to C-terminus: Solute carrier family 2, facilitated glucose transporter member 6 (507 aa).

The segment at 1–28 (MQEPLLGAEGPDYDTFPEKPPPSPGDRA) is disordered. Residues 1–37 (MQEPLLGAEGPDYDTFPEKPPPSPGDRARVGTLQNKR) are Cytoplasmic-facing. The short motif at 5-6 (LL) is the Dileucine internalization motif element. Residue Ser-23 is modified to Phosphoserine. A helical transmembrane segment spans residues 38–58 (VFLATFAAVLGNFSFGYALVY). Residues 59–81 (TSPVIPALERSLDPDLHLTKSQA) lie on the Extracellular side of the membrane. Residues 82-102 (SWFGSVFTLGAAAGGLSAMIL) traverse the membrane as a helical segment. Residues 103-111 (NDLLGRKLS) are Cytoplasmic-facing. A helical transmembrane segment spans residues 112-132 (IMFSAVPSAAGYALMAGAHGL). Over 133–140 (WMLLLGRT) the chain is Extracellular. A helical membrane pass occupies residues 141 to 161 (LTGFAGGLTAACIPVYVSEIA). At 162-168 (PPGVRGA) the chain is on the cytoplasmic side. The chain crosses the membrane as a helical span at residues 169 to 189 (LGATPQLMAVFGSLSLYALGL). Gln-174 is an a D-hexose binding site. The Extracellular segment spans residues 190 to 194 (LLPWR). Residues 195–215 (WLAVAGEAPVLIMILLLSFMP) traverse the membrane as a helical segment. Topologically, residues 216–289 (NSPRFLLSRG…LLMRLLQQLT (74 aa)) are cytoplasmic. 286-287 (QQ) contacts a D-hexose. The chain crosses the membrane as a helical span at residues 290-310 (GITPILVYLQSIFDSTAVLLP). Topologically, residues 311-314 (PKDD) are extracellular. A helical membrane pass occupies residues 315 to 335 (AAIVGAVRLLSVLIAALTMDL). The Cytoplasmic segment spans residues 336–339 (AGRK). Residues 340–360 (VLLFVSAAIMFAANLTLGLYI) form a helical membrane-spanning segment. Topologically, residues 361 to 395 (HFGPRPLSPNSTAGLESESWGDLAQPLAAPAGYLT) are extracellular. Asn-370 carries an N-linked (GlcNAc...) asparagine glycan. The helical transmembrane segment at 396-416 (LVPLLATMLFIMGYAVGWGPI) threads the bilayer. Residues 417 to 435 (TWLLMSEVLPLRARGVASG) lie on the Cytoplasmic side of the membrane. Trp-418 contributes to the a D-hexose binding site. A helical membrane pass occupies residues 436–456 (LCVLASWLTAFVLTKSFLPVV). Topologically, residues 457–462 (STFGLQ) are extracellular. A helical transmembrane segment spans residues 463–483 (VPFFFFAAICLVSLVFTGCCV). The Cytoplasmic portion of the chain corresponds to 484-507 (PETKGRSLEQIESFFRTGRRSFLR).

This sequence belongs to the major facilitator superfamily. Sugar transporter (TC 2.A.1.1) family. Glucose transporter subfamily. As to expression, highly expressed in brain, spleen and peripheral blood leukocytes.

Its subcellular location is the lysosome membrane. Its function is as follows. Probable sugar transporter that acts as a regulator of glycolysis in macrophages. Does not transport glucose. The polypeptide is Solute carrier family 2, facilitated glucose transporter member 6 (Homo sapiens (Human)).